A 226-amino-acid chain; its full sequence is 2,3-bisphosphoglycerate-dependent phosphoglycerate mutase (226 aa).

Substrate is bound by residues 8-15 (RHGQSQWN), 21-22 (TG), Arg-58, 112-115 (ERMY), Lys-123, 139-140 (RR), and 183-184 (GN). His-9 (tele-phosphohistidine intermediate) is an active-site residue. Glu-112 (proton donor/acceptor) is an active-site residue.

Belongs to the phosphoglycerate mutase family. BPG-dependent PGAM subfamily.

The enzyme catalyses (2R)-2-phosphoglycerate = (2R)-3-phosphoglycerate. It participates in carbohydrate degradation; glycolysis; pyruvate from D-glyceraldehyde 3-phosphate: step 3/5. Its function is as follows. Catalyzes the interconversion of 2-phosphoglycerate and 3-phosphoglycerate. In Protochlamydia amoebophila (strain UWE25), this protein is 2,3-bisphosphoglycerate-dependent phosphoglycerate mutase.